The sequence spans 281 residues: ATP synthase gamma chain (281 aa).

The protein belongs to the ATPase gamma chain family. In terms of assembly, F-type ATPases have 2 components, CF(1) - the catalytic core - and CF(0) - the membrane proton channel. CF(1) has five subunits: alpha(3), beta(3), gamma(1), delta(1), epsilon(1). CF(0) has three main subunits: a, b and c.

Its subcellular location is the cell membrane. Functionally, produces ATP from ADP in the presence of a proton gradient across the membrane. The gamma chain is believed to be important in regulating ATPase activity and the flow of protons through the CF(0) complex. The polypeptide is ATP synthase gamma chain (Clostridium pasteurianum).